A 422-amino-acid polypeptide reads, in one-letter code: Platelet-activating factor acetylhydrolase (422 aa).

The N-terminal stretch at 1-21 (MASLWVRARRVFMKSRASGFS) is a signal peptide. The active-site Nucleophile is Ser266. Asp289 functions as the Charge relay system in the catalytic mechanism. Asn331 carries an N-linked (GlcNAc...) asparagine glycan. Catalysis depends on His345, which acts as the Charge relay system.

This sequence belongs to the AB hydrolase superfamily. Lipase family. As to expression, plasma.

It is found in the secreted. Its subcellular location is the extracellular space. The catalysed reaction is a 1-O-alkyl-2-acetyl-sn-glycero-3-phosphocholine + H2O = a 1-O-alkyl-sn-glycero-3-phosphocholine + acetate + H(+). Its function is as follows. Modulates the action of platelet-activating factor (PAF) by hydrolyzing the sn-2 ester bond to yield the biologically inactive lyso-PAF. Has a specificity for substrates with a short residue at the sn-2 position. It is inactive against long-chain phospholipids. The protein is Platelet-activating factor acetylhydrolase (PLA2G7) of Gallus gallus (Chicken).